Here is a 601-residue protein sequence, read N- to C-terminus: Elongation factor 4 (601 aa).

In terms of domain architecture, tr-type G spans 5–188 (SHIRNFAIIA…ALVLRLPPPT (184 aa)). Residues 17 to 22 (DHGKST) and 135 to 138 (NKID) contribute to the GTP site.

This sequence belongs to the TRAFAC class translation factor GTPase superfamily. Classic translation factor GTPase family. LepA subfamily.

It localises to the cell inner membrane. It catalyses the reaction GTP + H2O = GDP + phosphate + H(+). Required for accurate and efficient protein synthesis under certain stress conditions. May act as a fidelity factor of the translation reaction, by catalyzing a one-codon backward translocation of tRNAs on improperly translocated ribosomes. Back-translocation proceeds from a post-translocation (POST) complex to a pre-translocation (PRE) complex, thus giving elongation factor G a second chance to translocate the tRNAs correctly. Binds to ribosomes in a GTP-dependent manner. The chain is Elongation factor 4 from Rhodospirillum rubrum (strain ATCC 11170 / ATH 1.1.1 / DSM 467 / LMG 4362 / NCIMB 8255 / S1).